The following is a 178-amino-acid chain: Flagellar transcriptional regulator FlhC (178 aa).

Cys-138, Cys-141, Cys-158, and Cys-161 together coordinate Zn(2+).

It belongs to the FlhC family. As to quaternary structure, heterohexamer composed of two FlhC and four FlhD subunits. Each FlhC binds a FlhD dimer, forming a heterotrimer, and a hexamer assembles by dimerization of two heterotrimers. Zn(2+) serves as cofactor.

It is found in the cytoplasm. In terms of biological role, functions in complex with FlhD as a master transcriptional regulator that regulates transcription of several flagellar and non-flagellar operons by binding to their promoter region. Activates expression of class 2 flagellar genes, including fliA, which is a flagellum-specific sigma factor that turns on the class 3 genes. Also regulates genes whose products function in a variety of physiological pathways. In Erwinia tasmaniensis (strain DSM 17950 / CFBP 7177 / CIP 109463 / NCPPB 4357 / Et1/99), this protein is Flagellar transcriptional regulator FlhC.